The chain runs to 348 residues: Ferredoxin--NADP reductase 1 (348 aa).

Positions 33, 41, 45, 85, 120, 287, and 328 each coordinate FAD.

It belongs to the ferredoxin--NADP reductase type 2 family. Homodimer. FAD is required as a cofactor.

It carries out the reaction 2 reduced [2Fe-2S]-[ferredoxin] + NADP(+) + H(+) = 2 oxidized [2Fe-2S]-[ferredoxin] + NADPH. The polypeptide is Ferredoxin--NADP reductase 1 (Oceanobacillus iheyensis (strain DSM 14371 / CIP 107618 / JCM 11309 / KCTC 3954 / HTE831)).